The primary structure comprises 392 residues: Galactokinase (392 aa).

Alpha-D-galactose contacts are provided by Arg-37, Glu-43, His-44, and Asp-46. ATP-binding residues include Gly-136, Gly-138, Ser-140, and Ser-141. Asp-186 lines the alpha-D-galactose pocket. Asp-186 serves as the catalytic Proton acceptor. Ser-230 is subject to Phosphoserine. Tyr-236 provides a ligand contact to alpha-D-galactose.

It belongs to the GHMP kinase family. GalK subfamily. Homodimer.

It carries out the reaction alpha-D-galactose + ATP = alpha-D-galactose 1-phosphate + ADP + H(+). Its pathway is carbohydrate metabolism; galactose metabolism. Functionally, catalyzes the transfer of a phosphate from ATP to alpha-D-galactose and participates in the first committed step in the catabolism of galactose. The chain is Galactokinase (Galk1) from Mus musculus (Mouse).